Consider the following 310-residue polypeptide: Formimidoylglutamase (310 aa).

Residues histidine 120, aspartate 148, histidine 150, aspartate 152, aspartate 233, and aspartate 235 each contribute to the Mn(2+) site.

This sequence belongs to the arginase family. It depends on Mn(2+) as a cofactor.

It carries out the reaction N-formimidoyl-L-glutamate + H2O = formamide + L-glutamate. Its pathway is amino-acid degradation; L-histidine degradation into L-glutamate; L-glutamate from N-formimidoyl-L-glutamate (hydrolase route): step 1/1. In terms of biological role, catalyzes the conversion of N-formimidoyl-L-glutamate to L-glutamate and formamide. The chain is Formimidoylglutamase from Nocardia farcinica (strain IFM 10152).